The chain runs to 335 residues: Glycerol-3-phosphate dehydrogenase [NAD(P)+] (335 aa).

The NADPH site is built by Ser-15, Tyr-16, Arg-36, and Lys-110. Positions 110, 139, and 141 each coordinate sn-glycerol 3-phosphate. Ala-143 is a binding site for NADPH. 5 residues coordinate sn-glycerol 3-phosphate: Lys-195, Asp-248, Ser-258, Arg-259, and Asn-260. Lys-195 acts as the Proton acceptor in catalysis. An NADPH-binding site is contributed by Arg-259. NADPH is bound by residues Val-283 and Glu-285.

Belongs to the NAD-dependent glycerol-3-phosphate dehydrogenase family.

It localises to the cytoplasm. It carries out the reaction sn-glycerol 3-phosphate + NAD(+) = dihydroxyacetone phosphate + NADH + H(+). It catalyses the reaction sn-glycerol 3-phosphate + NADP(+) = dihydroxyacetone phosphate + NADPH + H(+). Its pathway is membrane lipid metabolism; glycerophospholipid metabolism. Catalyzes the reduction of the glycolytic intermediate dihydroxyacetone phosphate (DHAP) to sn-glycerol 3-phosphate (G3P), the key precursor for phospholipid synthesis. This chain is Glycerol-3-phosphate dehydrogenase [NAD(P)+], found in Pseudoalteromonas translucida (strain TAC 125).